The following is a 281-amino-acid chain: Probable splicing factor, arginine/serine-rich 2 (281 aa).

Positions 2-72 constitute an RRM 1 domain; that stretch reads VRVYIGRLPN…ERVILEFPRR (71 aa). 2 stretches are compositionally biased toward basic and acidic residues: residues 78–97 and 168–190; these read EERS…KGGE and KLQG…DRSR. Disordered stretches follow at residues 78-100 and 168-281; these read EERS…ERQF and KLQG…SASP. One can recognise an RRM 2 domain in the interval 112–186; sequence FRLVIDNLST…RKLKCTDETR (75 aa). A compositionally biased stretch (basic residues) spans 191–215; the sequence is SRSPRRRSRSRSPTRSRSPPARRRS. The span at 216 to 225 shows a compositional bias: basic and acidic residues; that stretch reads PGSDRSDRKS. The span at 245-254 shows a compositional bias: basic residues; sequence RSRSGGRRSR.

This sequence belongs to the splicing factor SR family. Extensively phosphorylated on serine residues in the RS domain.

It is found in the nucleus. Its function is as follows. Plays a functionally redundant role in spermatogenesis and growth rate control. Required for the development of somatic gonad structures and for progression from larval stage to adulthood. The sequence is that of Probable splicing factor, arginine/serine-rich 2 (rsp-2) from Caenorhabditis elegans.